The following is a 403-amino-acid chain: Tyrosine--tRNA ligase (403 aa).

Residues 46–55 (PTAPDLHLGH) carry the 'HIGH' region motif. The short motif at 230–234 (KMSKS) is the 'KMSKS' region element. ATP is bound at residue Lys233. The S4 RNA-binding domain maps to 342–402 (LFITQILNQA…GKKAYAKVTV (61 aa)).

It belongs to the class-I aminoacyl-tRNA synthetase family. TyrS type 2 subfamily. As to quaternary structure, homodimer.

Its subcellular location is the cytoplasm. It catalyses the reaction tRNA(Tyr) + L-tyrosine + ATP = L-tyrosyl-tRNA(Tyr) + AMP + diphosphate + H(+). Catalyzes the attachment of tyrosine to tRNA(Tyr) in a two-step reaction: tyrosine is first activated by ATP to form Tyr-AMP and then transferred to the acceptor end of tRNA(Tyr). This Psychrobacter arcticus (strain DSM 17307 / VKM B-2377 / 273-4) protein is Tyrosine--tRNA ligase.